Consider the following 165-residue polypeptide: Putative pre-16S rRNA nuclease (165 aa).

This sequence belongs to the YqgF nuclease family.

The protein localises to the cytoplasm. In terms of biological role, could be a nuclease involved in processing of the 5'-end of pre-16S rRNA. The protein is Putative pre-16S rRNA nuclease of Rhizobium meliloti (strain 1021) (Ensifer meliloti).